We begin with the raw amino-acid sequence, 124 residues long: Ribonuclease P protein component (124 aa).

This sequence belongs to the RnpA family. As to quaternary structure, consists of a catalytic RNA component (M1 or rnpB) and a protein subunit.

The enzyme catalyses Endonucleolytic cleavage of RNA, removing 5'-extranucleotides from tRNA precursor.. Functionally, RNaseP catalyzes the removal of the 5'-leader sequence from pre-tRNA to produce the mature 5'-terminus. It can also cleave other RNA substrates such as 4.5S RNA. The protein component plays an auxiliary but essential role in vivo by binding to the 5'-leader sequence and broadening the substrate specificity of the ribozyme. The sequence is that of Ribonuclease P protein component from Mycolicibacterium gilvum (strain PYR-GCK) (Mycobacterium gilvum (strain PYR-GCK)).